The primary structure comprises 347 residues: Autoinducer 2 import system permease protein LsrC (347 aa).

The next 9 membrane-spanning stretches (helical) occupy residues 14–34 (LLAI…YLSV), 39–59 (MVFS…MVML), 72–92 (GMCA…PVAC), 93–113 (LATL…VAWL), 115–135 (IPAI…MLLW), 155–175 (VFLG…LMAW), 213–233 (LNGG…GFIP), 249–269 (VLGG…ILGA), and 284–304 (IPAW…LVFD).

The protein belongs to the binding-protein-dependent transport system permease family. AraH/RbsC subfamily. In terms of assembly, the complex is composed of two ATP-binding proteins (LsrA), two transmembrane proteins (LsrC and LsrD) and a solute-binding protein (LsrB).

The protein localises to the cell inner membrane. In terms of biological role, part of the ABC transporter complex LsrABCD involved in autoinducer 2 (AI-2) import. Probably responsible for the translocation of the substrate across the membrane. The sequence is that of Autoinducer 2 import system permease protein LsrC (lsrC) from Salmonella typhi.